The chain runs to 626 residues: Chaperone protein HtpG (626 aa).

Positions 1–331 are a; substrate-binding; the sequence is MSETVERHEF…TDDLPLNVSR (331 aa). Residues 332-544 are b; the sequence is EMLQSTPTLQ…GMGPDLQMQR (213 aa). The segment at 545–626 is c; it reads LLRRAGRGFG…GTAAKPAGSA (82 aa).

This sequence belongs to the heat shock protein 90 family. In terms of assembly, homodimer.

It is found in the cytoplasm. In terms of biological role, molecular chaperone. Has ATPase activity. This chain is Chaperone protein HtpG, found in Methylorubrum extorquens (strain CM4 / NCIMB 13688) (Methylobacterium extorquens).